We begin with the raw amino-acid sequence, 206 residues long: Small ribosomal subunit protein uS4 (206 aa).

Residues 96-158 (SRLDNVVYRM…AKKQLRIQNA (63 aa)) enclose the S4 RNA-binding domain.

It belongs to the universal ribosomal protein uS4 family. In terms of assembly, part of the 30S ribosomal subunit. Contacts protein S5. The interaction surface between S4 and S5 is involved in control of translational fidelity.

Functionally, one of the primary rRNA binding proteins, it binds directly to 16S rRNA where it nucleates assembly of the body of the 30S subunit. With S5 and S12 plays an important role in translational accuracy. The protein is Small ribosomal subunit protein uS4 of Francisella tularensis subsp. tularensis (strain FSC 198).